The chain runs to 326 residues: DnaJ homolog subfamily B member 6 (326 aa).

The J domain occupies 2–69 (VDYYEVLGVQ…KKRDIYDKYG (68 aa)). An interaction with HSP70 region spans residues 2 to 146 (VDYYEVLGVQ…TGSFFSAFSG (145 aa)). The segment at 119–242 (FEDFFGNRRG…ADDDALAEER (124 aa)) is interaction with KRT18. Arg135 carries the omega-N-methylarginine modification. The disordered stretch occupies residues 249–326 (ALPAQPAGLR…KKKKSTKGNH (78 aa)). Position 277 is a phosphoserine (Ser277).

As to quaternary structure, homooligomer. Interacts with BAG3, HSPB8 and STUB1. Interacts with ALKBH1. Interacts with HSP70, KRT18 and PTTG.

It localises to the cytoplasm. The protein localises to the perinuclear region. Its subcellular location is the nucleus. The protein resides in the myofibril. It is found in the sarcomere. It localises to the z line. Has a stimulatory effect on the ATPase activity of HSP70 in a dose-dependent and time-dependent manner and hence acts as a co-chaperone of HSP70. Plays an indispensable role in the organization of KRT8/KRT18 filaments. Acts as an endogenous molecular chaperone for neuronal proteins including huntingtin. Suppresses aggregation and toxicity of polyglutamine-containing, aggregation-prone proteins. Also reduces cellular toxicity and caspase-3 activity. The chain is DnaJ homolog subfamily B member 6 (DNAJB6) from Pongo abelii (Sumatran orangutan).